An 810-amino-acid polypeptide reads, in one-letter code: E3 ubiquitin-protein ligase RNF10 (810 aa).

Low complexity predominate over residues 1 to 31 (MPQSSPSAAATASDMDKNSGSSSSSASSGSS). Positions 1 to 119 (MPQSSPSAAA…SFNGGRRDEV (119 aa)) are disordered. Position 5 is a phosphoserine (Ser5). The segment covering 76-92 (NFINQSRRSNSQKSKTF) has biased composition (polar residues). The interval 101–185 (GGSSKLFSSS…FNKELFLQAN (85 aa)) is interaction with MEOX2. Residues 104 to 113 (SKLFSSSFNG) are compositionally biased toward low complexity. 2 positions are modified to phosphoserine: Ser110 and Ser128. Residues 225-267 (CPICLYPPTAAKITRCGHIFCWACILHYLSLSEKTWSKCPICY) form an RING-type zinc finger. 4 disordered regions span residues 598–623 (KRKR…EENK), 652–674 (DSAL…LSRS), 722–759 (ADVW…PVPS), and 775–810 (LDTP…VHTK). Residues 607 to 623 (AREERRRERRIEMEENK) show a composition bias toward basic and acidic residues. Polar residues predominate over residues 652-661 (DSALGSTSTE). Residues 662–674 (GRGALSLSPLSRS) show a composition bias toward low complexity. Positions 722-735 (ADVWPKTAPKKDEN) are enriched in basic and acidic residues. A compositionally biased stretch (polar residues) spans 801–810 (LFSTSVVHTK).

This sequence belongs to the RNF10 family. Interacts with MEOX2.

Its subcellular location is the cytoplasm. It is found in the nucleus. It catalyses the reaction S-ubiquitinyl-[E2 ubiquitin-conjugating enzyme]-L-cysteine + [acceptor protein]-L-lysine = [E2 ubiquitin-conjugating enzyme]-L-cysteine + N(6)-ubiquitinyl-[acceptor protein]-L-lysine.. It functions in the pathway protein modification; protein ubiquitination. E3 ubiquitin-protein ligase that catalyzes monoubiquitination of 40S ribosomal proteins RPS2/us5 and RPS3/us3 in response to ribosome stalling. Part of a ribosome quality control that takes place when ribosomes have stalled during translation initiation (iRQC): RNF10 acts by mediating monoubiquitination of RPS2/us5 and RPS3/us3, promoting their degradation by the proteasome. Also promotes ubiquitination of 40S ribosomal proteins in response to ribosome stalling during translation elongation. The action of RNF10 in iRQC is counteracted by USP10. May also act as a transcriptional factor involved in the regulation of MAG (Myelin-associated glycoprotein) expression. Acts as a regulator of Schwann cell differentiation and myelination. The chain is E3 ubiquitin-protein ligase RNF10 (RNF10) from Bos taurus (Bovine).